Reading from the N-terminus, the 622-residue chain is Low affinity potassium transport system protein Kup (622 aa).

Transmembrane regions (helical) follow at residues 9–29, 49–69, 103–123, 137–157, 165–185, 213–233, 247–267, 276–296, 337–357, 363–383, 396–416, and 419–439; these read LPAITLAAIGVVYGDIGTSPL, VFGFLSLIFWLLIFVVSIKYL, VIMGLIGGSFFYGEVVITPAI, PQLDTWIVPLSIIVLTLLFMI, VGKLFAPIMLTWFLILAVLGL, VSFIALGAVVLSITGVEALYA, WFTVVLPSLVLNYFGQGALLL, PFFLLAPDWALIPLLILAALA, IYIPFVNWLLYFAVVVVIVSF, LAAAYGIAVTGTMVLTSILST, FVALILIAFLCVDIPLFSANL, and LLSGGWLPLSLGLIMFTIMTT.

It belongs to the HAK/KUP transporter (TC 2.A.72) family.

The protein resides in the cell inner membrane. It catalyses the reaction K(+)(in) + H(+)(in) = K(+)(out) + H(+)(out). Responsible for the low-affinity transport of potassium into the cell. Likely operates as a K(+):H(+) symporter. The chain is Low affinity potassium transport system protein Kup from Salmonella paratyphi B (strain ATCC BAA-1250 / SPB7).